Consider the following 760-residue polypeptide: uncharacterized protein (760 aa).

Residues 578-587 show a composition bias toward basic residues; sequence RNRKQSKLRI. The disordered stretch occupies residues 578–604; sequence RNRKQSKLRISKQQEIQPQKEESVKKE. Positions 595-604 are enriched in basic and acidic residues; sequence PQKEESVKKE.

The protein resides in the mitochondrion. This is an uncharacterized protein from Dictyostelium citrinum (Slime mold).